Consider the following 445-residue polypeptide: tRNA modification GTPase MnmE (445 aa).

Positions 20, 79, and 119 each coordinate (6S)-5-formyl-5,6,7,8-tetrahydrofolate. Positions 215–371 (GLKLAIVGPP…ILKNIENIAE (157 aa)) constitute a TrmE-type G domain. Residue asparagine 225 participates in K(+) binding. GTP-binding positions include 225–230 (NTGKSS), 244–250 (SNIAGTT), and 269–272 (DTAG). Mg(2+) is bound at residue serine 229. K(+) is bound by residues serine 244, isoleucine 246, and threonine 249. Threonine 250 lines the Mg(2+) pocket. Lysine 445 contributes to the (6S)-5-formyl-5,6,7,8-tetrahydrofolate binding site.

This sequence belongs to the TRAFAC class TrmE-Era-EngA-EngB-Septin-like GTPase superfamily. TrmE GTPase family. In terms of assembly, homodimer. Heterotetramer of two MnmE and two MnmG subunits. K(+) is required as a cofactor.

The protein resides in the cytoplasm. Functionally, exhibits a very high intrinsic GTPase hydrolysis rate. Involved in the addition of a carboxymethylaminomethyl (cmnm) group at the wobble position (U34) of certain tRNAs, forming tRNA-cmnm(5)s(2)U34. The polypeptide is tRNA modification GTPase MnmE (Rickettsia akari (strain Hartford)).